A 422-amino-acid chain; its full sequence is MKKVRLSEKFTPHFLEVWRTVKAAQHLKYVLKGGRGSAKSTHIAMWIILLMMMMPITFLVIRRVYNTVEQSVFEQLKEAIDMLEVGHLWKVSKSPLRLTYIPRGNSIIFRGGDDVQKIKSIKASKFPVAGMWIEELAEFKTEEEVSVIEKSVLRAELPPGCRYIFFYSYNPPKRKQSWVNKVFNSSFLPANTFVDHSTYLQNPFLSKAFIEEAEEVKRRNELKYRHEYLGEALGSGVVPFENLQIEEGIITDAEVARFDNIRQGLDFGYGPDPLAFVRWHYDKRKNRIYAIDELVDHKVSLKRTADFVRKNKYESARIIADSSEPRSIDALKLEHGINRIEGAKKGPDSVEHGERWLDELDAIVIDPLRTPNIAREFENIDYQTDKNGDPIPRLEDKDNHTIDATRYAFERDMKKGGVSLWG.

Residues 1 to 198 form an ATPase activity region; it reads MKKVRLSEKF…PANTFVDHST (198 aa). The Walker A motif motif lies at 33–40; the sequence is GGRGSAKS. The Walker B motif signature appears at 130-135; that stretch reads GMWIEE. Glu-135 acts as the For ATPase activity in catalysis. Residues 232–422 are nuclease activity and binding to the portal protein; sequence ALGSGVVPFE…MKKGGVSLWG (191 aa). The Mn(2+) site is built by Asp-266, Asp-321, His-400, and Asp-403.

Monomer. Interacts with the terminase small subunit; the active complex is probably composed of two decameric ring-shaped terminase small subunit and two monomeric terminase large subunit. Interacts with the portal protein. Mn(2+) serves as cofactor. Requires Mg(2+) as cofactor.

Functionally, the terminase large subunit acts as an ATP driven molecular motor necessary for viral DNA translocation into empty capsids and as an endonuclease that cuts the viral genome to initiate and to end a packaging reaction. The terminase lies at a unique vertex of the procapsid and is composed of two subunits, a small terminase subunit involved in viral DNA recognition (packaging sequence), and a large terminase subunit possessing endonucleolytic and ATPase activities. Both terminase subunits heterooligomerize and are docked on the portal protein to form the packaging machine. The terminase large subunit exhibits endonuclease activity and cleaves the viral genome concatemer once the capsid is full (headful packaging). Once the capsid is packaged with the DNA, the terminase complex is substituted by the adapter (gp15) and the stopper protein (gp16) that form the connector. The chain is Terminase, large subunit (2) from Bacillus phage SPP1 (Bacteriophage SPP1).